Reading from the N-terminus, the 232-residue chain is Phosphatidylserine decarboxylase proenzyme (232 aa).

Residue S190 is the Schiff-base intermediate with substrate; via pyruvic acid of the active site. A Pyruvic acid (Ser); by autocatalysis modification is found at S190.

Belongs to the phosphatidylserine decarboxylase family. PSD-A subfamily. As to quaternary structure, heterodimer of a large membrane-associated beta subunit and a small pyruvoyl-containing alpha subunit. The cofactor is pyruvate. Is synthesized initially as an inactive proenzyme. Formation of the active enzyme involves a self-maturation process in which the active site pyruvoyl group is generated from an internal serine residue via an autocatalytic post-translational modification. Two non-identical subunits are generated from the proenzyme in this reaction, and the pyruvate is formed at the N-terminus of the alpha chain, which is derived from the carboxyl end of the proenzyme. The post-translation cleavage follows an unusual pathway, termed non-hydrolytic serinolysis, in which the side chain hydroxyl group of the serine supplies its oxygen atom to form the C-terminus of the beta chain, while the remainder of the serine residue undergoes an oxidative deamination to produce ammonia and the pyruvoyl prosthetic group on the alpha chain.

The protein localises to the cell membrane. It catalyses the reaction a 1,2-diacyl-sn-glycero-3-phospho-L-serine + H(+) = a 1,2-diacyl-sn-glycero-3-phosphoethanolamine + CO2. It functions in the pathway phospholipid metabolism; phosphatidylethanolamine biosynthesis; phosphatidylethanolamine from CDP-diacylglycerol: step 2/2. Catalyzes the formation of phosphatidylethanolamine (PtdEtn) from phosphatidylserine (PtdSer). This chain is Phosphatidylserine decarboxylase proenzyme, found in Rhizobium johnstonii (strain DSM 114642 / LMG 32736 / 3841) (Rhizobium leguminosarum bv. viciae).